Here is a 338-residue protein sequence, read N- to C-terminus: tRNA N6-adenosine threonylcarbamoyltransferase (338 aa).

The Fe cation site is built by His111 and His115. Substrate is bound by residues 134–138 (LVSGG), Asp167, Gly180, and Asn272. Asp300 contacts Fe cation.

It belongs to the KAE1 / TsaD family. Fe(2+) is required as a cofactor.

The protein localises to the cytoplasm. The enzyme catalyses L-threonylcarbamoyladenylate + adenosine(37) in tRNA = N(6)-L-threonylcarbamoyladenosine(37) in tRNA + AMP + H(+). Required for the formation of a threonylcarbamoyl group on adenosine at position 37 (t(6)A37) in tRNAs that read codons beginning with adenine. Is involved in the transfer of the threonylcarbamoyl moiety of threonylcarbamoyl-AMP (TC-AMP) to the N6 group of A37, together with TsaE and TsaB. TsaD likely plays a direct catalytic role in this reaction. This Shewanella pealeana (strain ATCC 700345 / ANG-SQ1) protein is tRNA N6-adenosine threonylcarbamoyltransferase.